We begin with the raw amino-acid sequence, 92 residues long: Large ribosomal subunit protein eL43 (92 aa).

The C4-type zinc-finger motif lies at 39-60; it reads CSFCGKKAVKRGAAGIWNCSSC.

This sequence belongs to the eukaryotic ribosomal protein eL43 family.

This chain is Large ribosomal subunit protein eL43 (RPL43), found in Eremothecium gossypii (strain ATCC 10895 / CBS 109.51 / FGSC 9923 / NRRL Y-1056) (Yeast).